Consider the following 264-residue polypeptide: Undecaprenyl-diphosphatase (264 aa).

8 consecutive transmembrane segments (helical) span residues 1–21 (MDIV…FLPI), 39–59 (QGLA…VFYF), 83–103 (STLV…GLAF), 113–133 (SGIV…LADK), 143–163 (VTIK…IPGV), 181–201 (VGSA…AGGL), 220–240 (LAAL…MSII), and 244–264 (SMTP…FIFV).

It belongs to the UppP family.

The protein resides in the cell inner membrane. The enzyme catalyses di-trans,octa-cis-undecaprenyl diphosphate + H2O = di-trans,octa-cis-undecaprenyl phosphate + phosphate + H(+). Functionally, catalyzes the dephosphorylation of undecaprenyl diphosphate (UPP). Confers resistance to bacitracin. This chain is Undecaprenyl-diphosphatase, found in Campylobacter curvus (strain 525.92).